Reading from the N-terminus, the 306-residue chain is UDP-3-O-acyl-N-acetylglucosamine deacetylase (306 aa).

Residues His-79, His-238, and Asp-242 each coordinate Zn(2+). The active-site Proton donor is His-265.

Belongs to the LpxC family. Requires Zn(2+) as cofactor.

It catalyses the reaction a UDP-3-O-[(3R)-3-hydroxyacyl]-N-acetyl-alpha-D-glucosamine + H2O = a UDP-3-O-[(3R)-3-hydroxyacyl]-alpha-D-glucosamine + acetate. Its pathway is glycolipid biosynthesis; lipid IV(A) biosynthesis; lipid IV(A) from (3R)-3-hydroxytetradecanoyl-[acyl-carrier-protein] and UDP-N-acetyl-alpha-D-glucosamine: step 2/6. Its function is as follows. Catalyzes the hydrolysis of UDP-3-O-myristoyl-N-acetylglucosamine to form UDP-3-O-myristoylglucosamine and acetate, the committed step in lipid A biosynthesis. The chain is UDP-3-O-acyl-N-acetylglucosamine deacetylase from Shewanella loihica (strain ATCC BAA-1088 / PV-4).